The chain runs to 4043 residues: Polyketide synthase-nonribosomal peptide synthetase (4043 aa).

The Ketosynthase family 3 (KS3) domain occupies 8–446 (SEPIAIIGTG…GANSHAILES (439 aa)). Catalysis depends on for beta-ketoacyl synthase activity residues cysteine 181, histidine 320, and histidine 366. Residues 557–877 (VFTGQGAQWA…SRGNSDVEAF (321 aa)) are acyl transferase. The interval 944-1078 (NELLGRQVLD…CRLRITVGDS (135 aa)) is N-terminal hotdog fold. A PKS/mFAS DH domain is found at 944–1246 (NELLGRQVLD…TQPLSSPTEA (303 aa)). The tract at residues 945-1243 (ELLGRQVLDG…GLQTQPLSSP (299 aa)) is dehydratase (DH) domain. The active-site Proton acceptor; for dehydratase activity is histidine 976. The C-terminal hotdog fold stretch occupies residues 1093-1246 (LLEVESDRFY…TQPLSSPTEA (154 aa)). Aspartate 1154 functions as the Proton donor; for dehydratase activity in the catalytic mechanism. A methyltransferase (MT) domain region spans residues 1400–1585 (RYTKYLAAMA…GIETAIPHHD (186 aa)). Positions 2115–2288 (TYWLVGLTGG…NASAVHIGAI (174 aa)) are ketoreductase (KR)domain. A Carrier 1 domain is found at 2394–2475 (SSSADIYDII…EMVTQAQELL (82 aa)). A peptidyl carrier protein region spans residues 2395 to 2472 (SSADIYDIIS…TVGEMVTQAQ (78 aa)). Serine 2435 bears the O-(pantetheine 4'-phosphoryl)serine mark. Disordered regions lie at residues 2476-2575 (PKEL…DPSR) and 2587-2630 (EKHL…SQII). 2 stretches are compositionally biased toward polar residues: residues 2494-2512 (PKNT…QLQN) and 2520-2534 (ALSQ…NMIK). Residues 2537 to 2550 (PPKEAEAKQPRPEV) show a composition bias toward basic and acidic residues. Residues 2617–2627 (TSSSSSSTSAS) are compositionally biased toward low complexity. The segment at 2640-3069 (KSVPMAFGQS…NPALRLNVPP (430 aa)) is condensation. An adenylation region spans residues 3102–3502 (EIVERYPTHV…EGNLILGGRI (401 aa)). The 81-residue stretch at 3617 to 3697 (TDESPSMAKM…GMVSLIDHSE (81 aa)) folds into the Carrier 2 domain. The interval 3622-3694 (SMAKMRDVWA…SLTGMVSLID (73 aa)) is thiolation. Serine 3657 carries the post-translational modification O-(pantetheine 4'-phosphoryl)serine. Residues 3735-3954 (LTGATGFLGR…DFVSADRVAM (220 aa)) are reductase-like.

It in the C-terminal section; belongs to the NRP synthetase family.

It participates in mycotoxin biosynthesis. Functionally, hybrid PKS-NRPS synthetase; part of the gene cluster that mediates the biosynthesis of the mycotoxins cytochalasins E and K. The hybrid PKS-NRPS synthetase ccsA and the enoyl reductase ccsC are responsible for fusion of phenylalanine with an octaketide backbone and subsequent release of the stable tetramic acid precursor. The polyketide synthase module (PKS) of the PKS-NRPS ccsA is responsible for the synthesis of the octaketide backbone. The downstream nonribosomal peptide synthetase (NRPS) amidates the carboxyl end of the octaketide with a phenylalanine. A reductase-like domain (R) at the C-terminus catalyzes the reductive release of the polyketide-amino acid intermediate. Because ccsA lacks a designated enoylreductase (ER) domain, the required activity is provided the enoyl reductase ccsC. Upon formation of the 11-membered carbocycle-fused perhydroisoindolone intermediate, a number of oxidative steps are required to afford the final cytochalasin E and K, including two hydroxylations at C17 and C18, one alcohol oxidation at C17, one epoxidation at C6 and C7 and two Baeyer-Villiger oxidations. The oxidative modification at C17, C18 and the C6-C7 epoxidation are likely to be catalyzed by the two cytochrome P450 oxygenases ccsD and ccsG. CcsD may be responsible for the epoxidation of the C6-C7 double bond. CcsG may be responsible for the successive oxidative modifications at C17 and C18. The double Baeyer-Villiger oxidations of ketocytochalasin to precytochalasin and cytochalasin Z(16) are among the final steps leading to cytochalasin E and K and are catalyzed by ccsB. The first oxygen insertion step follows that of the classic BVMO mechanism, generating the ester precytochalasin. Release of precytochalasin into an aqueous environment can generate the shunt product iso-precytochalasin through spontaneous isomerization. Alternatively, precytochalasin can undergo further oxidation by ccsB to yield the in-line carbonate-containing cytochalasin Z(16). Cytochalasin Z(16) is a precursor to cytochalasin E and cytochalasin K, whereas iso-precytochalasin is a precursor to cytochalasin Z(17) and rosellichalasin. The hydrolyase ccsE may catalyze hydrolysis of epoxide bond in cytochalasin E to afford cytochalasin K. The function of ccsF has not been assigned but it may play a role in post-PKS-NRPS biosynthetic step, resistance or transport of cytochalasins and related PKS-NRPS products. In Aspergillus clavatus (strain ATCC 1007 / CBS 513.65 / DSM 816 / NCTC 3887 / NRRL 1 / QM 1276 / 107), this protein is Polyketide synthase-nonribosomal peptide synthetase.